The chain runs to 860 residues: Leucine--tRNA ligase (860 aa).

The 'HIGH' region motif lies at 42–52; sequence PYPSGRLHMGH. Positions 619 to 623 match the 'KMSKS' region motif; the sequence is KMSKS. Residue K622 participates in ATP binding.

The protein belongs to the class-I aminoacyl-tRNA synthetase family.

The protein localises to the cytoplasm. It carries out the reaction tRNA(Leu) + L-leucine + ATP = L-leucyl-tRNA(Leu) + AMP + diphosphate. The chain is Leucine--tRNA ligase from Escherichia coli (strain SMS-3-5 / SECEC).